The following is a 431-amino-acid chain: Enolase (431 aa).

Residue glutamine 167 participates in (2R)-2-phosphoglycerate binding. Catalysis depends on glutamate 209, which acts as the Proton donor. The Mg(2+) site is built by aspartate 246, glutamate 289, and aspartate 316. Residues lysine 341, arginine 370, serine 371, and lysine 392 each coordinate (2R)-2-phosphoglycerate. Lysine 341 (proton acceptor) is an active-site residue.

The protein belongs to the enolase family. In terms of assembly, component of the RNA degradosome, a multiprotein complex involved in RNA processing and mRNA degradation. Mg(2+) serves as cofactor.

The protein resides in the cytoplasm. The protein localises to the secreted. It localises to the cell surface. The catalysed reaction is (2R)-2-phosphoglycerate = phosphoenolpyruvate + H2O. It participates in carbohydrate degradation; glycolysis; pyruvate from D-glyceraldehyde 3-phosphate: step 4/5. Functionally, catalyzes the reversible conversion of 2-phosphoglycerate (2-PG) into phosphoenolpyruvate (PEP). It is essential for the degradation of carbohydrates via glycolysis. The polypeptide is Enolase (Shewanella sediminis (strain HAW-EB3)).